Here is a 91-residue protein sequence, read N- to C-terminus: Small ribosomal subunit protein uS15c (91 aa).

This sequence belongs to the universal ribosomal protein uS15 family. Part of the 30S ribosomal subunit.

Its subcellular location is the plastid. It is found in the chloroplast. This Cicer arietinum (Chickpea) protein is Small ribosomal subunit protein uS15c (rps15).